A 78-amino-acid polypeptide reads, in one-letter code: Large ribosomal subunit protein bL28 (78 aa).

Residues 1–26 (MSAYCQVTGRKPSFGKSVSHSHRRTN) are disordered.

The protein belongs to the bacterial ribosomal protein bL28 family.

This chain is Large ribosomal subunit protein bL28, found in Corynebacterium jeikeium (strain K411).